The chain runs to 132 residues: D-beta-hydroxybutyrate dehydrogenase, mitochondrial (132 aa).

3-27 serves as a coordination point for NAD(+); it reads LVTGCDSGFGFSLAKHLHSKGFLVF. At Lys17 the chain carries N6-acetyllysine. Ser59 serves as a coordination point for substrate. The Proton acceptor role is filled by Tyr66. Lys70 is subject to N6-acetyllysine. O-linked (GlcNAc) serine glycosylation occurs at Ser77. Residue Ser104 is modified to Phosphoserine.

The protein belongs to the short-chain dehydrogenases/reductases (SDR) family. Homotetramer.

It localises to the mitochondrion inner membrane. The protein resides in the mitochondrion matrix. The enzyme catalyses (R)-3-hydroxybutanoate + NAD(+) = acetoacetate + NADH + H(+). Requires phosphatidylcholine as an allosteric activator for enzymatic activity. The chain is D-beta-hydroxybutyrate dehydrogenase, mitochondrial from Mesocricetus auratus (Golden hamster).